The sequence spans 436 residues: UDP-N-acetylmuramate--L-alanine ligase (436 aa).

110-116 (GAHGKTS) provides a ligand contact to ATP.

It belongs to the MurCDEF family.

It localises to the cytoplasm. It catalyses the reaction UDP-N-acetyl-alpha-D-muramate + L-alanine + ATP = UDP-N-acetyl-alpha-D-muramoyl-L-alanine + ADP + phosphate + H(+). It participates in cell wall biogenesis; peptidoglycan biosynthesis. Functionally, cell wall formation. The protein is UDP-N-acetylmuramate--L-alanine ligase of Lacticaseibacillus paracasei (strain ATCC 334 / BCRC 17002 / CCUG 31169 / CIP 107868 / KCTC 3260 / NRRL B-441) (Lactobacillus paracasei).